A 512-amino-acid polypeptide reads, in one-letter code: MDTSLFSLFVSILVFVFIALFKKSKKPKYVKAPAPSGAWPIIGHLHLLGGKEQLLYRTLGKMADHYGPAMSLRLGSSETFVGSSFEVAKDCFTVNDKALASLMTAAAKHMGYVFWLEMRKIAMIELLSNRRLQMLNNVRVSEISMGVKDLYSLWVKKGGSEPVMVDLKSWLEDMIANMIMRMVAGKRYFGGGGAESSEHTEEARQWRKGIAKFFHLVGIFTVSDAFPKLGWLDLQGHEKEMKQTRRELDVILERWIENHRQQRKVSGTKHNDSDFVDVMLSLAEQGKLSHLQYDANTCIKTTCLALILGGSETSPSTLTWAISLLLNNKDMLKKVQDEIDIHVGRDRNVEDSDIKNLVYLQAIIKETLRLYPAAPLLGHREAMEDCTVAGYNVPCGTRLIVNVWKIQRDPKVYMEPNEFRPERFITGEAKDFDVRGQNFELMPFGSGRRSCPGPSLAMQMLHLGLARFLHSFEVKTVLDRPVDMSESPGLTITKATPLEVLINPRLKRELFV.

A helical transmembrane segment spans residues M1–F21. C451 is a binding site for heme.

It belongs to the cytochrome P450 family. Heme serves as cofactor.

It localises to the membrane. The protein is Cytochrome P450 82C3 (CYP82C3) of Arabidopsis thaliana (Mouse-ear cress).